The sequence spans 266 residues: 3-methyl-2-oxobutanoate hydroxymethyltransferase (266 aa).

Mg(2+) is bound by residues Asp-46 and Asp-85. Residues 46–47, Asp-85, and Lys-115 contribute to the 3-methyl-2-oxobutanoate site; that span reads DS. Residue Glu-117 coordinates Mg(2+). Residue Glu-183 is the Proton acceptor of the active site.

This sequence belongs to the PanB family. As to quaternary structure, homodecamer; pentamer of dimers. The cofactor is Mg(2+).

The protein resides in the cytoplasm. The catalysed reaction is 3-methyl-2-oxobutanoate + (6R)-5,10-methylene-5,6,7,8-tetrahydrofolate + H2O = 2-dehydropantoate + (6S)-5,6,7,8-tetrahydrofolate. It functions in the pathway cofactor biosynthesis; (R)-pantothenate biosynthesis; (R)-pantoate from 3-methyl-2-oxobutanoate: step 1/2. Functionally, catalyzes the reversible reaction in which hydroxymethyl group from 5,10-methylenetetrahydrofolate is transferred onto alpha-ketoisovalerate to form ketopantoate. The sequence is that of 3-methyl-2-oxobutanoate hydroxymethyltransferase from Trichlorobacter lovleyi (strain ATCC BAA-1151 / DSM 17278 / SZ) (Geobacter lovleyi).